Consider the following 483-residue polypeptide: Cysteine proteinase 1, mitochondrial (483 aa).

Residues 1–30 constitute a mitochondrion transit peptide; sequence MLPTSVSRSLYLKTFRSHLLRAPQIVLKRM. Catalysis depends on residues Cys-102, His-398, and Asn-421. Lys-483 is a propeptide (removed in mature form; by autocatalysis).

It belongs to the peptidase C1 family. As to quaternary structure, homohexamer. Binds to nucleic acids. Binds single-stranded DNA and RNA with higher affinity than double-stranded DNA. In terms of processing, the N-terminus of isoform Cytoplasmic is blocked.

The protein localises to the mitochondrion. The protein resides in the cytoplasm. It carries out the reaction Inactivates bleomycin B2 (a cytotoxic glycometallopeptide) by hydrolysis of a carboxyamide bond of beta-aminoalanine, but also shows general aminopeptidase activity. The specificity varies somewhat with source, but amino acid arylamides of Met, Leu and Ala are preferred.. Inhibited by E64, a specific inhibitor of cysteine proteases, N-ethylmaleimide, iodacetamide, and mercury and zinc ions. Functionally, the normal physiological role of the enzyme is unknown, but it is not essential for the viability of yeast cells. Has aminopeptidase activity, shortening substrate peptides sequentially by 1 amino acid. Has bleomycin hydrolase activity, which can protect the cell from the toxic effects of bleomycin. Has homocysteine-thiolactonase activity, protecting the cell against homocysteine toxicity. Acts as a repressor in the GAL4 regulatory system, but this does not require either the peptidase or nucleic acid-binding activities. This is Cysteine proteinase 1, mitochondrial (LAP3) from Saccharomyces cerevisiae (strain AWRI1631) (Baker's yeast).